A 248-amino-acid chain; its full sequence is Tyrosine recombinase XerD-like (248 aa).

One can recognise a Core-binding (CB) domain in the interval 1-72 (MIAFIEPFLA…TVNQFLYYLY (72 aa)). The Tyr recombinase domain maps to 92–248 (SLKPQLTRLD…PITLEKYYKM (157 aa)). Residue arginine 213 is part of the active site. Tyrosine 245 (O-(3'-phospho-DNA)-tyrosine intermediate) is an active-site residue.

It belongs to the 'phage' integrase family. XerD-like subfamily.

The protein resides in the cytoplasm. Functionally, putative tyrosine recombinase. Not involved in the cutting and rejoining of the recombining DNA molecules on dif(SL) site. The protein is Tyrosine recombinase XerD-like of Streptococcus equi subsp. zooepidemicus (strain H70).